A 184-amino-acid polypeptide reads, in one-letter code: ATP synthase subunit b, chloroplastic (184 aa).

A helical transmembrane segment spans residues 31–53; the sequence is LINLAVVIGVLVYFGKGVLTTIL.

This sequence belongs to the ATPase B chain family. As to quaternary structure, F-type ATPases have 2 components, F(1) - the catalytic core - and F(0) - the membrane proton channel. F(1) has five subunits: alpha(3), beta(3), gamma(1), delta(1), epsilon(1). F(0) has four main subunits: a(1), b(1), b'(1) and c(10-14). The alpha and beta chains form an alternating ring which encloses part of the gamma chain. F(1) is attached to F(0) by a central stalk formed by the gamma and epsilon chains, while a peripheral stalk is formed by the delta, b and b' chains.

The protein localises to the plastid. The protein resides in the chloroplast thylakoid membrane. In terms of biological role, f(1)F(0) ATP synthase produces ATP from ADP in the presence of a proton or sodium gradient. F-type ATPases consist of two structural domains, F(1) containing the extramembraneous catalytic core and F(0) containing the membrane proton channel, linked together by a central stalk and a peripheral stalk. During catalysis, ATP synthesis in the catalytic domain of F(1) is coupled via a rotary mechanism of the central stalk subunits to proton translocation. Component of the F(0) channel, it forms part of the peripheral stalk, linking F(1) to F(0). The polypeptide is ATP synthase subunit b, chloroplastic (Staurastrum punctulatum (Green alga)).